Here is a 235-residue protein sequence, read N- to C-terminus: Large ribosomal subunit protein uL1 (235 aa).

The protein belongs to the universal ribosomal protein uL1 family. As to quaternary structure, part of the 50S ribosomal subunit.

In terms of biological role, binds directly to 23S rRNA. The L1 stalk is quite mobile in the ribosome, and is involved in E site tRNA release. Protein L1 is also a translational repressor protein, it controls the translation of the L11 operon by binding to its mRNA. The polypeptide is Large ribosomal subunit protein uL1 (Desulfovibrio desulfuricans (strain ATCC 27774 / DSM 6949 / MB)).